Here is a 726-residue protein sequence, read N- to C-terminus: Methyltransferase FGSG_00040 (726 aa).

TPR repeat units lie at residues 187 to 220 (SSDI…GQNV), 224 to 257 (QLAF…AMPS), and 258 to 291 (EKSL…YPEN). In terms of domain architecture, SET spans 336–531 (APVEIRESPG…AKTEIFFCYR (196 aa)). S-adenosyl-L-methionine is bound at residue Tyr-530.

The protein belongs to the class V-like SAM-binding methyltransferase superfamily.

It functions in the pathway mycotoxin biosynthesis. Its function is as follows. Methyltransferase; part of the gene cluster that mediates the biosynthesis of gramillins A and B, bicyclic lipopeptides that induce cell death in maize leaves but not in wheat leaves. The nonribosomal peptide synthetase GRA1 incorporates respectively a glutamic adic (Glu), a leucine (Leu), a serine (Ser), a hydroxyglutamine (HOGln), a 2-amino decanoic acid, and 2 cysteins (CysB and CysA). The biosynthesis of 2-amino decanoic acid incorporated in gramillins could be initiated by a fatty acid synthase composed of the alpha and beta subunits FGSG_00036 and FGSG_11656. The cytochrome P450 monooxygenase FGSG_15680 could hydroxylate the fatty acid chain. Subsequent oxidation to the ketone by the oxidoreductase FGSG_00048 and transamination by aminotransferase FGSG_00049 could form 2-amino-decanoic acid. On the other hand, FGSG_15680 could also be responsible for the HO-modified glutamine at the gamma-position. Whether hydroxylation occurs on the fully assembled product or on the Gln residue prior to assembly into the gramillins requires further proof. The thioredoxin FGSG_00043 could also be required for the disulfide-bond formation between CysA and CysB. The specific involvement of the remaining proteins from the cluster is more difficult to discern, but could have broader regulatory (FGSG_00040 and FGSG_11657) or enzymatic functions (FGSG_00044 and FGSG_00045). The final C-domain of GRA1 does not possess the expected sequence of a termination CT domain, often implicated in macrocyclization and release of a cyclopeptidein fungal NRPs; and the thioesterase FGSG_00047 may act in concert with the terminal C-domain of GRA1 to catalyze the formation of the macrocyclic anhydride and release of the products. The protein is Methyltransferase FGSG_00040 of Gibberella zeae (strain ATCC MYA-4620 / CBS 123657 / FGSC 9075 / NRRL 31084 / PH-1) (Wheat head blight fungus).